We begin with the raw amino-acid sequence, 1044 residues long: R3H domain-containing protein 2 (1044 aa).

Disordered stretches follow at residues 23–71 (EESV…AKSN) and 106–147 (SCPS…QEYT). Positions 36–56 (PSKEDVEKEGEENGLRQETQR) are enriched in basic and acidic residues. At Ser-37 the chain carries Phosphoserine. A compositionally biased stretch (basic residues) spans 58–71 (TSSHGHARKRAKSN). Residues 109–143 (SDKEEEKSTKDVSEKEDKDKSKEKVPRKMLSRDSS) show a composition bias toward basic and acidic residues. Ser-143 carries the post-translational modification Phosphoserine. An R3H domain is found at 169–232 (RMMLLKLEQE…AVIINKTSST (64 aa)). Residues 233–303 (RIPEQRFSEH…VRERIFARET (71 aa)) form the SUZ domain. 2 stretches are compositionally biased toward basic and acidic residues: residues 261–270 (DASMDRDDNQ) and 277–288 (DGRRSKSIEERE). Disordered regions lie at residues 261-288 (DASM…EERE), 320-408 (SSSS…LSRP), 433-485 (CTAQ…FSPS), 502-533 (MAED…LFQP), 551-600 (GQPL…SNQQ), 729-770 (GTSP…SPSG), and 807-848 (GQKP…SLSN). Positions 338–349 (SRTSSSRQSSTD) are enriched in low complexity. Ser-362, Ser-365, and Ser-381 each carry phosphoserine. Over residues 433 to 449 (CTAQQQQQQQQQQQQLP) the composition is skewed to low complexity. Composition is skewed to polar residues over residues 509 to 521 (PFGQ…QGST) and 554 to 572 (LPTS…QQVL). The segment covering 757 to 770 (PQMSQQYSGVSPSG) has biased composition (low complexity). Over residues 818–848 (GSPQANAQMGSSPVTSPTQSPAPSPVTSLSN) the composition is skewed to polar residues. Phosphoserine occurs at positions 921 and 923. Phosphothreonine occurs at positions 924 and 928.

It is found in the nucleus. This chain is R3H domain-containing protein 2 (R3hdm2), found in Mus musculus (Mouse).